The chain runs to 424 residues: F-box protein At2g38590 (424 aa).

Positions 2–47 (TTMISNLPRVLIEEIFFRVPLKSLRAVRLTCKSWNTLSKSRSFRKL) constitute an F-box domain.

The chain is F-box protein At2g38590 from Arabidopsis thaliana (Mouse-ear cress).